The following is a 59-amino-acid chain: Large ribosomal subunit protein uL30 (59 aa).

The protein belongs to the universal ribosomal protein uL30 family. In terms of assembly, part of the 50S ribosomal subunit.

The protein is Large ribosomal subunit protein uL30 of Mycolicibacterium vanbaalenii (strain DSM 7251 / JCM 13017 / BCRC 16820 / KCTC 9966 / NRRL B-24157 / PYR-1) (Mycobacterium vanbaalenii).